The chain runs to 309 residues: Homoserine O-succinyltransferase (309 aa).

Cysteine 142 acts as the Acyl-thioester intermediate in catalysis. Lysine 163 and serine 192 together coordinate substrate. The active-site Proton acceptor is the histidine 235. Glutamate 237 is a catalytic residue. Arginine 249 serves as a coordination point for substrate.

Belongs to the MetA family.

Its subcellular location is the cytoplasm. The catalysed reaction is L-homoserine + succinyl-CoA = O-succinyl-L-homoserine + CoA. The protein operates within amino-acid biosynthesis; L-methionine biosynthesis via de novo pathway; O-succinyl-L-homoserine from L-homoserine: step 1/1. Its function is as follows. Transfers a succinyl group from succinyl-CoA to L-homoserine, forming succinyl-L-homoserine. This chain is Homoserine O-succinyltransferase, found in Proteus mirabilis (strain HI4320).